The following is a 202-amino-acid chain: Recoverin (202 aa).

Gly-2 carries the N-myristoyl glycine lipid modification. At Cys-39 the chain carries Cysteine sulfenic acid (-SOH). 4 consecutive EF-hand domains span residues 41–59 (SGRITKQEFQSIYSKFFPE), 61–96 (DPKAYAQHVFRSFDANSDGTLDFKEYVIALHMTSAG), 97–132 (KTNQKLEWAFSLYDVDGNGAISKSEVLEIVMAIFKM), and 147–182 (TPEKRAEKIWGFFGKKDDDKLTEEEFIEGTLANKEI). Positions 74, 76, 78, 80, 85, 110, 112, 114, and 121 each coordinate Ca(2+). The interaction with GRK1 stretch occupies residues 189–192 (EPRK).

Belongs to the recoverin family. In terms of assembly, homodimer; disulfide-linked. Homodimerization is caused by prolonged intense illumination. May form a complex composed of RHO, GRK1 and RCVRN in a Ca(2+)-dependent manner; RCVRN prevents the interaction between GRK1 and RHO. Interacts (via C-terminus) with GRK1 (via N-terminus); the interaction is Ca(2+)-dependent. In terms of processing, the N-terminal glycine is linked to one of four different types of acyl groups. The most abundant is myristoleate (14:1), but 14:0, 14:2, and 12:0 acyl residues are also present. The Ca(2+) induced exposure of the myristoyl group, known as the calcium-myristoyl switch, promotes RCVRN binding to the photoreceptor cell membranes only when intracellular Ca(2+) concentration is high. Oxidation on Cys-39 occurs in response to prolonged intense illumination and results in the formation of disulfide homodimers, and to a lesser extent disulfide-linked heterodimers.

Its subcellular location is the photoreceptor inner segment. The protein resides in the cell projection. The protein localises to the cilium. It is found in the photoreceptor outer segment. It localises to the photoreceptor outer segment membrane. Its subcellular location is the perikaryon. Its function is as follows. Acts as a calcium sensor and regulates phototransduction of cone and rod photoreceptor cells. Modulates light sensitivity of cone photoreceptor in dark and dim conditions. In response to high Ca(2+) levels induced by low light levels, prolongs RHO/rhodopsin activation in rod photoreceptor cells by binding to and inhibiting GRK1-mediated phosphorylation of RHO/rhodopsin. Plays a role in scotopic vision/enhances vision in dim light by enhancing signal transfer between rod photoreceptors and rod bipolar cells. Improves rod photoreceptor sensitivity in dim light and mediates response of rod photoreceptors to facilitate detection of change and motion in bright light. In Canis lupus familiaris (Dog), this protein is Recoverin (RCVRN).